The chain runs to 105 residues: Met repressor (105 aa).

Belongs to the MetJ family. As to quaternary structure, homodimer.

The protein localises to the cytoplasm. Functionally, this regulatory protein, when combined with SAM (S-adenosylmethionine) represses the expression of the methionine regulon and of enzymes involved in SAM synthesis. This Haemophilus ducreyi (strain 35000HP / ATCC 700724) protein is Met repressor.